Reading from the N-terminus, the 499-residue chain is tRNA (guanine(37)-N(1))-methyltransferase (499 aa).

The N-terminal 44 residues, 1–44, are a transit peptide targeting the mitochondrion; the sequence is MKIALPVFQKFNRLISSCKMSGVFPYNPPVNRQMRELDRSFFIT. S-adenosyl-L-methionine contacts are provided by residues His-268, 307–308, 335–336, and Asn-399; these read DL and DG.

The protein belongs to the class I-like SAM-binding methyltransferase superfamily. TRM5/TYW2 family. As to quaternary structure, monomer.

It is found in the mitochondrion matrix. The protein resides in the nucleus. It localises to the cytoplasm. The catalysed reaction is guanosine(37) in tRNA + S-adenosyl-L-methionine = N(1)-methylguanosine(37) in tRNA + S-adenosyl-L-homocysteine + H(+). In terms of biological role, specifically methylates the N1 position of guanosine-37 in various cytoplasmic and mitochondrial tRNAs. Methylation is not dependent on the nature of the nucleoside 5' of the target nucleoside. This is the first step in the biosynthesis of wybutosine (yW), a modified base adjacent to the anticodon of tRNAs and required for accurate decoding. Postspliced cytoplasmic tRNAs are imported into the nucleus, where this first step seems to take place, after which they are reexported to the cytoplasm, where the yW sythesis is completed by cytoplasmic enzymes. The chain is tRNA (guanine(37)-N(1))-methyltransferase from Saccharomyces cerevisiae (strain ATCC 204508 / S288c) (Baker's yeast).